The following is a 329-amino-acid chain: Flotillin-like protein FloA (329 aa).

2 consecutive transmembrane segments (helical) span residues Ile4–Val24 and Val26–Gly46.

The protein belongs to the flotillin-like FloA family. As to quaternary structure, homooligomerizes.

It localises to the cell membrane. The protein resides in the membrane raft. Functionally, found in functional membrane microdomains (FMM) that may be equivalent to eukaryotic membrane rafts. FMMs are highly dynamic and increase in number as cells age. Flotillins are thought to be important factors in membrane fluidity. In Acetivibrio thermocellus (strain ATCC 27405 / DSM 1237 / JCM 9322 / NBRC 103400 / NCIMB 10682 / NRRL B-4536 / VPI 7372) (Clostridium thermocellum), this protein is Flotillin-like protein FloA.